The following is a 316-amino-acid chain: Ornithine carbamoyltransferase (316 aa).

Residues 59 to 62, Q86, R110, and 137 to 140 each bind carbamoyl phosphate; these read STRT and HPCQ. L-ornithine is bound by residues N168, D232, and 236–237; that span reads SM. Carbamoyl phosphate-binding positions include 273-274 and R301; that span reads CL.

The protein belongs to the aspartate/ornithine carbamoyltransferase superfamily. OTCase family.

The protein localises to the cytoplasm. It catalyses the reaction carbamoyl phosphate + L-ornithine = L-citrulline + phosphate + H(+). It participates in amino-acid degradation; L-arginine degradation via ADI pathway; carbamoyl phosphate from L-arginine: step 2/2. Functionally, reversibly catalyzes the transfer of the carbamoyl group from carbamoyl phosphate (CP) to the N(epsilon) atom of ornithine (ORN) to produce L-citrulline. In Listeria monocytogenes serotype 4a (strain HCC23), this protein is Ornithine carbamoyltransferase.